Reading from the N-terminus, the 523-residue chain is NADH-ubiquinone oxidoreductase chain 2 (523 aa).

Transmembrane regions (helical) follow at residues 3–23 (LFGV…IPAI), 30–50 (IILL…NNIG), 62–82 (VTTI…LVLL), 110–130 (SVLA…SSLI), 135–155 (LISM…LATI), 170–190 (FLLG…LYSF), 212–232 (IEIS…AAPF), 246–266 (VVTT…ILEF), 281–301 (LLLI…LAQY), 306–326 (LLTY…AINN), 333–353 (FLFY…ILVA), 386–406 (GLSL…VGFF), 419–439 (GNFF…AYYL), and 490–510 (LVIA…TPLL).

It belongs to the complex I subunit 2 family.

The protein resides in the mitochondrion inner membrane. The catalysed reaction is a ubiquinone + NADH + 5 H(+)(in) = a ubiquinol + NAD(+) + 4 H(+)(out). In terms of biological role, core subunit of the mitochondrial membrane respiratory chain NADH dehydrogenase (Complex I) that is believed to belong to the minimal assembly required for catalysis. Complex I functions in the transfer of electrons from NADH to the respiratory chain. The immediate electron acceptor for the enzyme is believed to be ubiquinone. The polypeptide is NADH-ubiquinone oxidoreductase chain 2 (Rhizopus oryzae (Mucormycosis agent)).